The chain runs to 313 residues: Uracil-DNA glycosylase (313 aa).

A compositionally biased stretch (polar residues) spans M1–S12. The interaction with FAM72A stretch occupies residues M1–E25. The mitochondrial localization signal stretch occupies residues M1–Q29. A disordered region spans residues M1–A68. S12 and S14 each carry phosphoserine. The short motif at R17–R19 is the Important for nuclear sorting element. S23 is modified (phosphoserine). Low complexity predominate over residues A43 to A53. Phosphothreonine is present on T60. Phosphoserine is present on S64. Positions R73–R88 are interaction with RPA2. Q153 lines the uracil pocket. D154 serves as the catalytic Proton acceptor. H157 lines the dsDNA pocket. A uracil-binding site is contributed by F167. S178 contributes to the dsDNA binding site. N213 is a binding site for uracil. 5 residues coordinate dsDNA: S256, H277, S279, S282, and R285. A uracil-binding site is contributed by H277. Position 295 is an N6-acetyllysine (K295).

Belongs to the uracil-DNA glycosylase (UDG) superfamily. UNG family. Monomer. As to quaternary structure, interacts with RPA2 subunit of the RPA trimer; this interaction mediates UNG2 recruitment to RPA-coated single-stranded DNA at stalled replication forks. Interacts with PCNA; this interaction mediates UNG2 recruitment to S-phase replication foci. Interacts (via N-terminus) with FAM72A. In terms of assembly, (Microbial infection) Interacts with HIV-1 Vpr. In terms of processing, processed by mitochondrial serine or cysteine peptidases to yield a mature dominant form that lacks N-terminal 29 amino acid residues and another minor form that lacks N-terminal 77 amino acid residues. The catalytic activity of UNG1 delta29 is not product-inhibited by AP sites.

The protein resides in the mitochondrion. The protein localises to the nucleus. The enzyme catalyses Hydrolyzes single-stranded DNA or mismatched double-stranded DNA and polynucleotides, releasing free uracil.. The catalysed reaction is a 2'-deoxyuridine in single-stranded DNA + H2O = a 2'-deoxyribose 5'-monophosphate in single-stranded DNA + uracil. It catalyses the reaction a 2'-deoxyuridine in double-stranded DNA + H2O = a 2'-deoxyribose 5'-monophosphate in double-stranded DNA + uracil. Functionally, uracil-DNA glycosylase that hydrolyzes the N-glycosidic bond between uracil and deoxyribose in single- and double-stranded DNA (ssDNA and dsDNA) to release a free uracil residue and form an abasic (apurinic/apyrimidinic; AP) site. Excises uracil residues arising as a result of misincorporation of dUMP residues by DNA polymerase during replication or due to spontaneous or enzymatic deamination of cytosine. Mediates error-free base excision repair (BER) of uracil at replication forks. According to the model, it is recruited by PCNA to S-phase replication forks to remove misincorporated uracil at U:A base mispairs in nascent DNA strands. Via trimeric RPA it is recruited to ssDNA stretches ahead of the polymerase to allow detection and excision of deaminated cytosines prior to replication. The resultant AP sites temporarily stall replication, allowing time to repair the lesion. Mediates mutagenic uracil processing involved in antibody affinity maturation. Processes AICDA-induced U:G base mispairs at variable immunoglobulin (Ig) regions leading to the generation of transversion mutations. Operates at switch sites of Ig constant regions where it mediates Ig isotype class switch recombination. Excises AICDA-induced uracil residues forming AP sites that are subsequently nicked by APEX1 endonuclease. The accumulation of staggered nicks in opposite strands results in double strand DNA breaks that are finally resolved via non-homologous end joining repair pathway. The polypeptide is Uracil-DNA glycosylase (Homo sapiens (Human)).